The sequence spans 360 residues: DNA replication and repair protein RecF (360 aa).

30–37 is an ATP binding site; sequence GQNGSGKT.

Belongs to the RecF family.

The protein resides in the cytoplasm. The RecF protein is involved in DNA metabolism; it is required for DNA replication and normal SOS inducibility. RecF binds preferentially to single-stranded, linear DNA. It also seems to bind ATP. In Shewanella baltica (strain OS155 / ATCC BAA-1091), this protein is DNA replication and repair protein RecF.